Consider the following 160-residue polypeptide: Cytochrome b6-f complex subunit 4 (160 aa).

Transmembrane regions (helical) follow at residues 36 to 56, 95 to 115, and 128 to 148; these read LLYI…GLAV, LLGI…PFIE, and IAMS…IGAC.

This sequence belongs to the cytochrome b family. PetD subfamily. The 4 large subunits of the cytochrome b6-f complex are cytochrome b6, subunit IV (17 kDa polypeptide, PetD), cytochrome f and the Rieske protein, while the 4 small subunits are PetG, PetL, PetM and PetN. The complex functions as a dimer.

The protein resides in the cellular thylakoid membrane. Its function is as follows. Component of the cytochrome b6-f complex, which mediates electron transfer between photosystem II (PSII) and photosystem I (PSI), cyclic electron flow around PSI, and state transitions. This is Cytochrome b6-f complex subunit 4 from Prochlorococcus marinus (strain MIT 9301).